The sequence spans 271 residues: Protein PXR1 (271 aa).

Positions Thr-25–Lys-72 constitute a G-patch domain. Residues Ser-147–Asn-239 form a disordered region. The segment covering Asp-157–Glu-168 has biased composition (acidic residues). Over residues Lys-175–Glu-203 the composition is skewed to basic residues. A compositionally biased stretch (basic and acidic residues) spans Glu-204–Lys-221. Ser-230 carries the phosphoserine modification.

This sequence belongs to the PINX1 family. As to quaternary structure, interacts with EST2.

The protein localises to the nucleus. It is found in the nucleolus. Functionally, involved in rRNA-processing at A0, A1 and A2 sites through its action in U18 and U24 snoRNA 3'-end final trimming. Negative regulator of telomerase throughX competition for binding to EST2 with TLC1. The sequence is that of Protein PXR1 (PXR1) from Saccharomyces cerevisiae (strain YJM789) (Baker's yeast).